The following is a 204-amino-acid chain: MSNFTVKVPLSERMADVLISKDRWKDDEEGYLKVKYGLEIILINVMKFAIVYGISLATGLLLQTVTVHMSYLWLRRYSFGLHATKTLNCTLISLAMFVLAPFVFQNIPSNNWIVLGTFAFILLNMFLFAPADTESLPLIGEKHRKTLKRKAMIGTLILTGIALLIPFAEMKTLIMVGSLFQVISINPLSYKLLKRRYRNYEKYE.

Helical transmembrane passes span 40–60 (IILI…ATGL), 87–107 (LNCT…FQNI), 111–131 (NWIV…FAPA), and 156–176 (LILT…LIMV).

Belongs to the AgrB family.

Its subcellular location is the cell membrane. Its function is as follows. May be involved in the proteolytic processing of a quorum sensing system signal molecule precursor. This chain is Putative AgrB-like protein, found in Listeria welshimeri serovar 6b (strain ATCC 35897 / DSM 20650 / CCUG 15529 / CIP 8149 / NCTC 11857 / SLCC 5334 / V8).